A 228-amino-acid polypeptide reads, in one-letter code: uncharacterized protein (228 aa).

The interval 90–115 (TDESEESSSANNTTTTASHTLSNSKK) is disordered. Low complexity predominate over residues 96–113 (SSSANNTTTTASHTLSNS).

It localises to the cytoplasm. Its subcellular location is the cell cortex. Its function is as follows. Deletion results in antifungal drug fluconazole-resistant phenotype. This is an uncharacterized protein from Saccharomyces cerevisiae (strain ATCC 204508 / S288c) (Baker's yeast).